Here is an 824-residue protein sequence, read N- to C-terminus: Lon protease (824 aa).

Positions 1–23 are disordered; it reads MNEPMSLFDDLPEEHDEPQEAPE. Positions 10–20 are enriched in acidic residues; the sequence is DLPEEHDEPQE. A Lon N-terminal domain is found at 26–222; the sequence is LPMVVLGEMV…KVYLVLARQL (197 aa). 375 to 382 lines the ATP pocket; sequence GPPGVGKT. The region spanning 617 to 798 is the Lon proteolytic domain; the sequence is QDEVGVATGV…DEVLRIALSR (182 aa). Active-site residues include serine 704 and lysine 747. The disordered stretch occupies residues 800-824; sequence PTPANNQNGSHTNNRGQPSPAPAGT. Residues 802-816 show a composition bias toward polar residues; that stretch reads PANNQNGSHTNNRGQ.

It belongs to the peptidase S16 family. In terms of assembly, homohexamer. Organized in a ring with a central cavity.

The protein localises to the cytoplasm. It carries out the reaction Hydrolysis of proteins in presence of ATP.. ATP-dependent serine protease that mediates the selective degradation of mutant and abnormal proteins as well as certain short-lived regulatory proteins. Required for cellular homeostasis and for survival from DNA damage and developmental changes induced by stress. Degrades polypeptides processively to yield small peptide fragments that are 5 to 10 amino acids long. Binds to DNA in a double-stranded, site-specific manner. The chain is Lon protease from Chloroflexus aggregans (strain MD-66 / DSM 9485).